Consider the following 108-residue polypeptide: Insulin (108 aa).

Residues 1 to 24 (MALWTRLLPLLALLALWAPAPAQA) form the signal peptide. Cystine bridges form between C31-C94, C43-C107, and C93-C98. The propeptide at 57-85 (EAENPQAGAVELGGGLGGLQALALEGPPQ) is c peptide.

It belongs to the insulin family. As to quaternary structure, heterodimer of a B chain and an A chain linked by two disulfide bonds.

It localises to the secreted. Insulin decreases blood glucose concentration. It increases cell permeability to monosaccharides, amino acids and fatty acids. It accelerates glycolysis, the pentose phosphate cycle, and glycogen synthesis in liver. In Sus scrofa (Pig), this protein is Insulin (INS).